Here is a 375-residue protein sequence, read N- to C-terminus: Anhydro-N-acetylmuramic acid kinase (375 aa).

12–19 (GTSMDGVD) serves as a coordination point for ATP.

It belongs to the anhydro-N-acetylmuramic acid kinase family.

It carries out the reaction 1,6-anhydro-N-acetyl-beta-muramate + ATP + H2O = N-acetyl-D-muramate 6-phosphate + ADP + H(+). The protein operates within amino-sugar metabolism; 1,6-anhydro-N-acetylmuramate degradation. It functions in the pathway cell wall biogenesis; peptidoglycan recycling. Catalyzes the specific phosphorylation of 1,6-anhydro-N-acetylmuramic acid (anhMurNAc) with the simultaneous cleavage of the 1,6-anhydro ring, generating MurNAc-6-P. Is required for the utilization of anhMurNAc either imported from the medium or derived from its own cell wall murein, and thus plays a role in cell wall recycling. The chain is Anhydro-N-acetylmuramic acid kinase from Photobacterium profundum (strain SS9).